The primary structure comprises 237 residues: Phosphoadenosine 5'-phosphosulfate reductase (237 aa).

The Nucleophile; cysteine thiosulfonate intermediate role is filled by C231.

This sequence belongs to the PAPS reductase family. CysH subfamily.

The protein localises to the cytoplasm. The catalysed reaction is [thioredoxin]-disulfide + sulfite + adenosine 3',5'-bisphosphate + 2 H(+) = [thioredoxin]-dithiol + 3'-phosphoadenylyl sulfate. It participates in sulfur metabolism; hydrogen sulfide biosynthesis; sulfite from sulfate: step 3/3. Functionally, catalyzes the formation of sulfite from phosphoadenosine 5'-phosphosulfate (PAPS) using thioredoxin as an electron donor. This chain is Phosphoadenosine 5'-phosphosulfate reductase, found in Xylella fastidiosa (strain M23).